The chain runs to 657 residues: THO complex subunit 1 (657 aa).

The residue at position 1 (Met-1) is an N-acetylmethionine. Ser-2 carries the phosphoserine modification. Thr-4 carries the phosphothreonine modification. A Glycyl lysine isopeptide (Lys-Gly) (interchain with G-Cter in SUMO2) cross-link involves residue Lys-31. At Lys-133 the chain carries N6-acetyllysine. Positions Lys-133–Phe-167 are dock domain; interaction with THOC2. Residues Gln-194–Ala-222 are disordered. Residues Arg-206–Ala-222 are compositionally biased toward acidic residues. A dock domain; interaction with THOC2 region spans residues Ser-227–Pro-397. Lys-300 is modified (N6-acetyllysine). Lys-408 participates in a covalent cross-link: Glycyl lysine isopeptide (Lys-Gly) (interchain with G-Cter in SUMO2). The Nuclear localization signal motif lies at Arg-414–Lys-430. Positions Leu-533–Val-569 are disordered. Residue Ser-537 is modified to Phosphoserine. Phosphothreonine is present on Thr-542. Positions Ala-553 to Val-569 are enriched in basic and acidic residues. At Ser-560 the chain carries Phosphoserine. One can recognise a Death domain in the interval Thr-570 to Asn-653. A Glycyl lysine isopeptide (Lys-Gly) (interchain with G-Cter in SUMO2) cross-link involves residue Lys-580. Lys-595 participates in a covalent cross-link: Glycyl lysine isopeptide (Lys-Gly) (interchain with G-Cter in SUMO1); alternate. Lys-595 participates in a covalent cross-link: Glycyl lysine isopeptide (Lys-Gly) (interchain with G-Cter in SUMO2); alternate.

It belongs to the THOC1 family. As to quaternary structure, component of the THO subcomplex, which is composed of THOC1, THOC2, THOC3, THOC5, THOC6 and THOC7. The THO subcomplex interacts with DDX39B to form the THO-DDX39B complex which multimerizes into a 28-subunit tetrameric assembly. Component of the transcription/export (TREX) complex at least composed of ALYREF/THOC4, DDX39B, SARNP/CIP29, CHTOP and the THO subcomplex; in the complex interacts with THOC2, THOC5 and THOC7. TREX seems to have a dynamic structure involving ATP-dependent remodeling. Binds to the hypophosphorylated form of RB1. Interacts with RNA polymerase II. Interacts with LUZP4. In terms of processing, expression is altered specifically during apoptosis and is accompanied by the appearance of novel forms with smaller apparent molecular mass. Post-translationally, polyubiquitinated, leading to proteasomal degradation; probably involves NEDD4. As to expression, ubiquitous. Expressed in various cancer cell lines. Expressed at very low levels in normal breast epithelial cells and highly expressed in breast tumors. Expression is strongly associated with an aggressive phenotype of breast tumors and expression correlates with tumor size and the metastatic state of the tumor progression.

The protein localises to the nucleus speckle. Its subcellular location is the nucleus. It localises to the nucleoplasm. It is found in the nucleus matrix. The protein resides in the cytoplasm. Its function is as follows. Component of the THO subcomplex of the TREX complex which is thought to couple mRNA transcription, processing and nuclear export, and which specifically associates with spliced mRNA and not with unspliced pre-mRNA. Required for efficient export of polyadenylated RNA. The THOC1-THOC2-THOC3 core complex alone is sufficient to bind export factor NXF1-NXT1 and promote ATPase activity of DDX39B/UAP56. TREX is recruited to spliced mRNAs by a transcription-independent mechanism, binds to mRNA upstream of the exon-junction complex (EJC) and is recruited in a splicing- and cap-dependent manner to a region near the 5' end of the mRNA where it functions in mRNA export to the cytoplasm via the TAP/NXF1 pathway. Regulates transcriptional elongation of a subset of genes. Involved in genome stability by preventing co-transcriptional R-loop formation. May play a role in hair cell formation, hence may be involved in hearing. Participates in an apoptotic pathway which is characterized by activation of caspase-6, increases in the expression of BAK1 and BCL2L1 and activation of NF-kappa-B. This pathway does not require p53/TP53, nor does the presence of p53/TP53 affect the efficiency of cell killing. Activates a G2/M cell cycle checkpoint prior to the onset of apoptosis. Apoptosis is inhibited by association with RB1. In terms of biological role, (Microbial infection) The TREX complex is essential for the export of Kaposi's sarcoma-associated herpesvirus (KSHV) intronless mRNAs and infectious virus production. The polypeptide is THO complex subunit 1 (THOC1) (Homo sapiens (Human)).